The following is a 377-amino-acid chain: Nucleosome assembly protein 1;2 (377 aa).

A coiled-coil region spans residues 26–80 (VNVLKNKLHDLTGKHSNVTESLSPNVRKRVEALREIQTEHDELEAKFFEERAALE). Residues 47–62 (LSPNVRKRVEALREIQ) carry the Nuclear export signal motif. The short motif at 223–228 (KKKPKK) is the Nuclear localization signal element. Residues 298–377 (EAAEDDYAEL…GERPPECKQQ (80 aa)) form a disordered region. Positions 299–342 (AAEDDYAELEDDEDEDDDEEDDEDEDEEEEDEEDDEDEEEDEDE) are enriched in acidic residues. Cysteine 374 is modified (cysteine methyl ester). A lipid anchor (S-farnesyl cysteine) is attached at cysteine 374. A propeptide spans 375 to 377 (KQQ) (removed in mature form).

Belongs to the nucleosome assembly protein (NAP) family. Binds preferentially histone H1 in vitro. Interacts with CYCB1;1.

It is found in the nucleus. The protein resides in the cytoplasm. Functionally, may modulate chromatin structure by regulation of nucleosome assembly/disassembly. Could function together with B-type cyclins in the regulation of microtubule dynamics. This chain is Nucleosome assembly protein 1;2 (NAP1;2), found in Nicotiana tabacum (Common tobacco).